The chain runs to 288 residues: ATP synthase subunit a (288 aa).

Helical transmembrane passes span 47-67, 104-124, 157-177, 199-219, 237-257, and 258-278; these read LDSM…FWMV, LIAP…LMDL, DPNI…FYSI, PIVQ…TLIA, LIFI…SVPW, and AIFH…LTIV.

This sequence belongs to the ATPase A chain family. In terms of assembly, F-type ATPases have 2 components, CF(1) - the catalytic core - and CF(0) - the membrane proton channel. CF(1) has five subunits: alpha(3), beta(3), gamma(1), delta(1), epsilon(1). CF(0) has three main subunits: a(1), b(2) and c(9-12). The alpha and beta chains form an alternating ring which encloses part of the gamma chain. CF(1) is attached to CF(0) by a central stalk formed by the gamma and epsilon chains, while a peripheral stalk is formed by the delta and b chains.

It is found in the cell inner membrane. Functionally, key component of the proton channel; it plays a direct role in the translocation of protons across the membrane. This chain is ATP synthase subunit a, found in Psychrobacter arcticus (strain DSM 17307 / VKM B-2377 / 273-4).